Consider the following 156-residue polypeptide: Ribosomal RNA large subunit methyltransferase H (156 aa).

Residues L73, G104, and 123–128 contribute to the S-adenosyl-L-methionine site; that span reads LSALTL.

Belongs to the RNA methyltransferase RlmH family. Homodimer.

The protein localises to the cytoplasm. The enzyme catalyses pseudouridine(1915) in 23S rRNA + S-adenosyl-L-methionine = N(3)-methylpseudouridine(1915) in 23S rRNA + S-adenosyl-L-homocysteine + H(+). In terms of biological role, specifically methylates the pseudouridine at position 1915 (m3Psi1915) in 23S rRNA. In Psychromonas ingrahamii (strain DSM 17664 / CCUG 51855 / 37), this protein is Ribosomal RNA large subunit methyltransferase H.